The chain runs to 185 residues: Tetrahydromethanopterin S-methyltransferase subunit A 2 (185 aa).

The Cytoplasmic segment spans residues 1 to 21 (MVDKKVDKKPVPEDWPHIVGD). A helical transmembrane segment spans residues 22 to 38 (YVVGDAESPVAVVTLGS). The Extracellular segment spans residues 39–185 (HMEDEPVRAG…LNKNKPDENT (147 aa)). Histidine 88 is a binding site for 5-hydroxybenzimidazolylcob(I)amide.

Belongs to the MtrA family. As to quaternary structure, the complex is composed of 8 subunits; MtrA, MtrB, MtrC, MtrD, MtrE, MtrF, MtrG and MtrH. Requires 5-hydroxybenzimidazolylcob(I)amide as cofactor.

The protein localises to the cell membrane. The catalysed reaction is 5-methyl-5,6,7,8-tetrahydromethanopterin + coenzyme M + 2 Na(+)(in) = 5,6,7,8-tetrahydromethanopterin + methyl-coenzyme M + 2 Na(+)(out). The protein operates within one-carbon metabolism; methanogenesis from CO(2); methyl-coenzyme M from 5,10-methylene-5,6,7,8-tetrahydromethanopterin: step 2/2. Functionally, part of a complex that catalyzes the formation of methyl-coenzyme M and tetrahydromethanopterin from coenzyme M and methyl-tetrahydromethanopterin. This is an energy-conserving, sodium-ion translocating step. In Methanothermobacter marburgensis (strain ATCC BAA-927 / DSM 2133 / JCM 14651 / NBRC 100331 / OCM 82 / Marburg) (Methanobacterium thermoautotrophicum), this protein is Tetrahydromethanopterin S-methyltransferase subunit A 2.